Consider the following 125-residue polypeptide: C-X-C motif chemokine 9 (125 aa).

An N-terminal signal peptide occupies residues 1–21 (MKKSAPLFLGIIFLTLTGVQG). 2 cysteine pairs are disulfide-bonded: cysteine 30-cysteine 57 and cysteine 32-cysteine 73. The disordered stretch occupies residues 91–125 (QVNQKKKQRKGKKYKKTKKVPKVKRSQRPSQKKTT). The segment covering 93 to 125 (NQKKKQRKGKKYKKTKKVPKVKRSQRPSQKKTT) has biased composition (basic residues).

This sequence belongs to the intercrine alpha (chemokine CxC) family.

It is found in the secreted. Its function is as follows. Cytokine that affects the growth, movement, or activation state of cells that participate in immune and inflammatory response. Chemotactic for activated T-cells. Binds to CXCR3. This chain is C-X-C motif chemokine 9 (CXCL9), found in Bos taurus (Bovine).